A 638-amino-acid polypeptide reads, in one-letter code: Chaperone protein DnaK (638 aa).

Residue Thr-198 is modified to Phosphothreonine; by autocatalysis. Disordered stretches follow at residues 539–559 and 602–638; these read DGLA…LASD and QAKA…DDKK. Over residues 611–623 the composition is skewed to basic and acidic residues; sequence GQAHDAGQEKPAD. Residues 624 to 638 are compositionally biased toward acidic residues; that stretch reads DVVDAEFEEVKDDKK.

This sequence belongs to the heat shock protein 70 family.

Acts as a chaperone. This is Chaperone protein DnaK from Shewanella frigidimarina (strain NCIMB 400).